The chain runs to 980 residues: Envelope glycoprotein B (980 aa).

Positions 1–14 are enriched in polar residues; sequence MSSGCRSVGGSTWG. Disordered regions lie at residues 1–20 and 88–118; these read MSSGCRSVGGSTWGNWRGDG and TTPSPPTSTPTSMSTHSHGTVDPTLLPTETP. Positions 1–86 are cleaved as a signal peptide; the sequence is MSSGCRSVGG…LFGSCVVRAV (86 aa). The Virion surface segment spans residues 87–849; it reads PTTPSPPTST…SGIASFLNNP (763 aa). Residues 96–118 are compositionally biased toward low complexity; sequence TPTSMSTHSHGTVDPTLLPTETP. 5 disulfide bridges follow: C140–C647, C157–C603, C231–C296, C389–C437, and C668–C708. An N-linked (GlcNAc...) asparagine; by host glycan is attached at N165. Residues 197-203 form an involved in fusion and/or binding to host membrane region; that stretch reads VWKGYSH. N275 is a glycosylation site (N-linked (GlcNAc...) asparagine; by host). An involved in fusion and/or binding to host membrane region spans residues 282–290; sequence GWMPWRHYT. N380, N423, N497, N514, N515, and N560 each carry an N-linked (GlcNAc...) asparagine; by host glycan. Low complexity predominate over residues 505-516; the sequence is LLNPNANNNNNT. The interval 505 to 535 is disordered; that stretch reads LLNPNANNNNNTTRRRRSLLSVPEPQPTQDG. 2 N-linked (GlcNAc...) asparagine; by host glycosylation sites follow: N727 and N749. Hydrophobic membrane proximal region regions lie at residues 794 to 847 and 823 to 843; these read IDSV…SFLN and AVGTLVLGAAGAVVSTVSGIA. The chain crosses the membrane as a helical span at residues 850-870; that stretch reads FGGLAIGLLVIAGLVAAFFAY. Over 871–980 the chain is Intravirion; it reads RYVMQIRSNP…NDTMENEKMV (110 aa). Residues 925–928 carry the Golgi targeting motif; that stretch reads YMSM. An Internalization motif motif is present at residues 965-968; the sequence is YTRL.

Belongs to the herpesviridae glycoprotein B family. Homotrimer; disulfide-linked. Binds to heparan sulfate proteoglycans. Interacts with gH/gL heterodimer. A proteolytic cleavage by host furin generates two subunits that remain linked by disulfide bonds.

Its subcellular location is the virion membrane. It localises to the host cell membrane. The protein resides in the host endosome membrane. The protein localises to the host Golgi apparatus membrane. Envelope glycoprotein that forms spikes at the surface of virion envelope. Essential for the initial attachment to heparan sulfate moieties of the host cell surface proteoglycans. Involved in fusion of viral and cellular membranes leading to virus entry into the host cell. Following initial binding to its host receptors, membrane fusion is mediated by the fusion machinery composed at least of gB and the heterodimer gH/gL. May be involved in the fusion between the virion envelope and the outer nuclear membrane during virion egress. The protein is Envelope glycoprotein B of Equus caballus (Horse).